We begin with the raw amino-acid sequence, 141 residues long: Fluoride-specific ion channel FluC 1 (141 aa).

4 helical membrane-spanning segments follow: residues 12 to 32 (LYALIAAGSVIGGCARYLVGV), 44 to 64 (WATLFVNVTGSFVIGFYAAIA), 79 to 99 (FVMTGICGGYTTFSGFSLETF), and 107 to 127 (ALAALINLGVSPMSWLVAVWL). Na(+) contacts are provided by G86 and T89.

The protein belongs to the fluoride channel Fluc/FEX (TC 1.A.43) family.

It localises to the cell inner membrane. It catalyses the reaction fluoride(in) = fluoride(out). Na(+) is not transported, but it plays an essential structural role and its presence is essential for fluoride channel function. In terms of biological role, fluoride-specific ion channel. Important for reducing fluoride concentration in the cell, thus reducing its toxicity. The protein is Fluoride-specific ion channel FluC 1 of Rhodopseudomonas palustris (strain BisB18).